We begin with the raw amino-acid sequence, 544 residues long: Chaperonin GroEL (544 aa).

ATP is bound by residues 30-33 (TLGP), Lys-51, 87-91 (DGTTT), Gly-415, and Asp-495.

The protein belongs to the chaperonin (HSP60) family. In terms of assembly, forms a cylinder of 14 subunits composed of two heptameric rings stacked back-to-back. Interacts with the co-chaperonin GroES.

It is found in the cytoplasm. It catalyses the reaction ATP + H2O + a folded polypeptide = ADP + phosphate + an unfolded polypeptide.. Its function is as follows. Together with its co-chaperonin GroES, plays an essential role in assisting protein folding. The GroEL-GroES system forms a nano-cage that allows encapsulation of the non-native substrate proteins and provides a physical environment optimized to promote and accelerate protein folding. This is Chaperonin GroEL from Neisseria meningitidis serogroup B (strain ATCC BAA-335 / MC58).